The sequence spans 423 residues: Phosphoribosylamine--glycine ligase (423 aa).

The 206-residue stretch at 107–312 (KDLCARYDIP…LLPILYATAT (206 aa)) folds into the ATP-grasp domain. An ATP-binding site is contributed by 133-193 (VRAQGAPIVI…EAFLDGEEAS (61 aa)). E282 and N284 together coordinate Mg(2+).

Belongs to the GARS family. Requires Mg(2+) as cofactor. Mn(2+) serves as cofactor.

The enzyme catalyses 5-phospho-beta-D-ribosylamine + glycine + ATP = N(1)-(5-phospho-beta-D-ribosyl)glycinamide + ADP + phosphate + H(+). The protein operates within purine metabolism; IMP biosynthesis via de novo pathway; N(1)-(5-phospho-D-ribosyl)glycinamide from 5-phospho-alpha-D-ribose 1-diphosphate: step 2/2. This Agrobacterium fabrum (strain C58 / ATCC 33970) (Agrobacterium tumefaciens (strain C58)) protein is Phosphoribosylamine--glycine ligase.